Consider the following 894-residue polypeptide: DNA mismatch repair protein MutS (894 aa).

Residue 632–639 (GPNMGGKS) coordinates ATP.

This sequence belongs to the DNA mismatch repair MutS family.

This protein is involved in the repair of mismatches in DNA. It is possible that it carries out the mismatch recognition step. This protein has a weak ATPase activity. This Paraburkholderia phytofirmans (strain DSM 17436 / LMG 22146 / PsJN) (Burkholderia phytofirmans) protein is DNA mismatch repair protein MutS.